Reading from the N-terminus, the 251-residue chain is Hydroxyacylglutathione hydrolase (251 aa).

Zn(2+) contacts are provided by H53, H55, D57, H58, H110, D127, and H165.

Belongs to the metallo-beta-lactamase superfamily. Glyoxalase II family. Monomer. Requires Zn(2+) as cofactor.

The enzyme catalyses an S-(2-hydroxyacyl)glutathione + H2O = a 2-hydroxy carboxylate + glutathione + H(+). It participates in secondary metabolite metabolism; methylglyoxal degradation; (R)-lactate from methylglyoxal: step 2/2. Functionally, thiolesterase that catalyzes the hydrolysis of S-D-lactoyl-glutathione to form glutathione and D-lactic acid. The polypeptide is Hydroxyacylglutathione hydrolase (Salmonella gallinarum (strain 287/91 / NCTC 13346)).